The sequence spans 624 residues: DNA mismatch repair protein MutL (624 aa).

Over residues asparagine 340–histidine 355 the composition is skewed to basic and acidic residues. Residues asparagine 340 to glutamine 415 are disordered. Polar residues-rich tracts occupy residues histidine 372–glutamate 383 and serine 391–glutamine 415.

This sequence belongs to the DNA mismatch repair MutL/HexB family.

Functionally, this protein is involved in the repair of mismatches in DNA. It is required for dam-dependent methyl-directed DNA mismatch repair. May act as a 'molecular matchmaker', a protein that promotes the formation of a stable complex between two or more DNA-binding proteins in an ATP-dependent manner without itself being part of a final effector complex. In Shewanella sediminis (strain HAW-EB3), this protein is DNA mismatch repair protein MutL.